We begin with the raw amino-acid sequence, 210 residues long: Probable GTP-binding protein EngB (210 aa).

The 177-residue stretch at 22 to 198 (FLPEYAFIGR…LTYIDEVNQE (177 aa)) folds into the EngB-type G domain. Residues 30 to 37 (GRSNVGKS), 57 to 61 (GKTQL), 75 to 78 (DLPG), 142 to 145 (TKAD), and 177 to 179 (TSS) contribute to the GTP site. Positions 37 and 59 each coordinate Mg(2+).

This sequence belongs to the TRAFAC class TrmE-Era-EngA-EngB-Septin-like GTPase superfamily. EngB GTPase family. It depends on Mg(2+) as a cofactor.

Necessary for normal cell division and for the maintenance of normal septation. This chain is Probable GTP-binding protein EngB, found in Flavobacterium johnsoniae (strain ATCC 17061 / DSM 2064 / JCM 8514 / BCRC 14874 / CCUG 350202 / NBRC 14942 / NCIMB 11054 / UW101) (Cytophaga johnsonae).